A 205-amino-acid chain; its full sequence is Imidazoleglycerol-phosphate dehydratase (205 aa).

This sequence belongs to the imidazoleglycerol-phosphate dehydratase family.

The catalysed reaction is D-erythro-1-(imidazol-4-yl)glycerol 3-phosphate = 3-(imidazol-4-yl)-2-oxopropyl phosphate + H2O. The protein operates within amino-acid biosynthesis; L-histidine biosynthesis; L-histidine from 5-phospho-alpha-D-ribose 1-diphosphate: step 6/9. This is Imidazoleglycerol-phosphate dehydratase (HIS3) from Phaffia rhodozyma (Yeast).